Consider the following 509-residue polypeptide: MRILAVTAEMFPFVKTGGLADATSALPQALERKGADVRTLLPLYRGLTPLVRGRKPVLVANILEQPVSVYYVVSDGHKLLLLEAASLFDRDGHPYGVKGEPFADNDLRFAVLSKVAAEIALGAIDGWQPDVVHVHDWHAALTCVYLADSTPSVASVLTLHNLAFQGQYPLERAGMLGLPSHLCTVDCLEYYDDMSFLKGGLTTASAVTTVSPTYAREILTPEMGMGMHGVLARRRGDLRGIVNGVDHDVWNPATDPYILANFTAATATRRSLNKYALLQALGLAPTQGPVFGVVSRLTWQKGIDLLPHVVPLIIERKGRLIVHGEGDTALEDSLQALAKRYPELVCAHIGYDERLAHMIQAGSDFIIQPSRFEPCGLTQLYALRYGALPIVSRTGGLAETIIDANDAAIEAGVATGFQFEPANEDDLRAALERAISAYNDRELFRRLQTQAMQANFSWDKSAAQYMALFESLVGNSTRETDAVADIRTETFAKIRADRRLAGTPGSPTG.

Position 15 (Lys-15) interacts with ADP-alpha-D-glucose.

It belongs to the glycosyltransferase 1 family. Bacterial/plant glycogen synthase subfamily.

The catalysed reaction is [(1-&gt;4)-alpha-D-glucosyl](n) + ADP-alpha-D-glucose = [(1-&gt;4)-alpha-D-glucosyl](n+1) + ADP + H(+). The protein operates within glycan biosynthesis; glycogen biosynthesis. Synthesizes alpha-1,4-glucan chains using ADP-glucose. This chain is Glycogen synthase 2 (glgA2), found in Agrobacterium fabrum (strain C58 / ATCC 33970) (Agrobacterium tumefaciens (strain C58)).